Here is a 328-residue protein sequence, read N- to C-terminus: Malate dehydrogenase (328 aa).

NAD(+) is bound at residue Gly-11–Gly-17. Positions 94 and 100 each coordinate substrate. NAD(+) contacts are provided by residues Asn-107, Gln-114, and Val-131–Asn-133. Substrate is bound by residues Asn-133 and Arg-164. His-189 serves as the catalytic Proton acceptor.

Belongs to the LDH/MDH superfamily. MDH type 2 family.

It catalyses the reaction (S)-malate + NAD(+) = oxaloacetate + NADH + H(+). Functionally, catalyzes the reversible oxidation of malate to oxaloacetate. The polypeptide is Malate dehydrogenase (Xanthomonas oryzae pv. oryzae (strain MAFF 311018)).